We begin with the raw amino-acid sequence, 335 residues long: Glucokinase (335 aa).

Position 11–16 (11–16 (ADIGGT)) interacts with ATP.

The protein belongs to the bacterial glucokinase family.

It is found in the cytoplasm. The catalysed reaction is D-glucose + ATP = D-glucose 6-phosphate + ADP + H(+). In Xanthomonas axonopodis pv. citri (strain 306), this protein is Glucokinase.